The following is a 60-amino-acid chain: Large ribosomal subunit protein eL37 (60 aa).

Residues Cys18, Cys21, Cys33, and Cys36 each coordinate Zn(2+). A C4-type zinc finger spans residues 18–36 (CRRCGKNSYHVRKKVCAAC).

The protein belongs to the eukaryotic ribosomal protein eL37 family. Zn(2+) serves as cofactor.

In terms of biological role, binds to the 23S rRNA. The protein is Large ribosomal subunit protein eL37 (rpl37e) of Methanothermobacter thermautotrophicus (strain ATCC 29096 / DSM 1053 / JCM 10044 / NBRC 100330 / Delta H) (Methanobacterium thermoautotrophicum).